The chain runs to 415 residues: Serine hydroxymethyltransferase (415 aa).

The segment covering 1 to 10 (MERSHIRDVD) has biased composition (basic and acidic residues). The disordered stretch occupies residues 1–21 (MERSHIRDVDPDAADALSSER). (6S)-5,6,7,8-tetrahydrofolate is bound by residues Leu-119 and 123–125 (GHL). Position 228 is an N6-(pyridoxal phosphate)lysine (Lys-228). 353–355 (SAF) provides a ligand contact to (6S)-5,6,7,8-tetrahydrofolate.

It belongs to the SHMT family. Homodimer. It depends on pyridoxal 5'-phosphate as a cofactor.

It is found in the cytoplasm. It catalyses the reaction (6R)-5,10-methylene-5,6,7,8-tetrahydrofolate + glycine + H2O = (6S)-5,6,7,8-tetrahydrofolate + L-serine. The protein operates within one-carbon metabolism; tetrahydrofolate interconversion. It participates in amino-acid biosynthesis; glycine biosynthesis; glycine from L-serine: step 1/1. Its function is as follows. Catalyzes the reversible interconversion of serine and glycine with tetrahydrofolate (THF) serving as the one-carbon carrier. Also exhibits THF-independent aldolase activity toward beta-hydroxyamino acids, producing glycine and aldehydes, via a retro-aldol mechanism. This is Serine hydroxymethyltransferase from Haloquadratum walsbyi (strain DSM 16790 / HBSQ001).